A 333-amino-acid chain; its full sequence is Electron transfer flavoprotein subunit alpha, mitochondrial (333 aa).

Residues 1–19 constitute a mitochondrion transit peptide; the sequence is MFRAAAPGQLRRATSLLRF. The tract at residues 20 to 204 is domain I; sequence QSTLVIAEHA…GISEWLDQKL (185 aa). Lys59 bears the N6-acetyllysine; alternate mark. Lys59 carries the N6-succinyllysine; alternate modification. Lys62 is modified (N6-acetyllysine). N6-acetyllysine; alternate is present on Lys69. The residue at position 69 (Lys69) is an N6-succinyllysine; alternate. Lys75 bears the N6-acetyllysine mark. Lys85 carries the N6-acetyllysine; alternate modification. Position 85 is an N6-succinyllysine; alternate (Lys85). Thr93 bears the Phosphothreonine mark. N6-acetyllysine occurs at positions 101 and 139. Ser140 is subject to Phosphoserine. Residue Lys158 is modified to N6-acetyllysine; alternate. An N6-succinyllysine; alternate modification is found at Lys158. Lys164 bears the N6-acetyllysine mark. N6-succinyllysine is present on Lys187. Position 203 is an N6-acetyllysine; alternate (Lys203). At Lys203 the chain carries N6-succinyllysine; alternate. The domain II stretch occupies residues 205–333; that stretch reads TKSDRPELTG…PEMTELLKKK (129 aa). Lys216 is subject to N6-succinyllysine. Arg223 contacts FAD. 2 positions are modified to N6-acetyllysine; alternate: Lys226 and Lys232. 2 positions are modified to N6-succinyllysine; alternate: Lys226 and Lys232. Residues Ser248, 263–266, 281–286, and Asn300 each bind FAD; these read VGQT and SGAIQH. Lys301 is modified (N6-succinyllysine). 318 to 319 contributes to the FAD binding site; sequence DL.

It belongs to the ETF alpha-subunit/FixB family. As to quaternary structure, heterodimer composed of ETFA and ETFB. Identified in a complex that contains ETFA, ETFB and ETFRF1. Interaction with ETFRF1 promotes dissociation of the bound FAD and loss of electron transfer activity. Interacts with TASOR. Requires FAD as cofactor.

The protein localises to the mitochondrion matrix. Functionally, heterodimeric electron transfer flavoprotein that accepts electrons from several mitochondrial dehydrogenases, including acyl-CoA dehydrogenases, glutaryl-CoA and sarcosine dehydrogenase. It transfers the electrons to the main mitochondrial respiratory chain via ETF-ubiquinone oxidoreductase (ETF dehydrogenase). Required for normal mitochondrial fatty acid oxidation and normal amino acid metabolism. This is Electron transfer flavoprotein subunit alpha, mitochondrial (ETFA) from Bos taurus (Bovine).